Here is a 331-residue protein sequence, read N- to C-terminus: 6-phosphogluconolactonase (331 aa).

This sequence belongs to the cycloisomerase 2 family.

It catalyses the reaction 6-phospho-D-glucono-1,5-lactone + H2O = 6-phospho-D-gluconate + H(+). Its pathway is carbohydrate degradation; pentose phosphate pathway; D-ribulose 5-phosphate from D-glucose 6-phosphate (oxidative stage): step 2/3. In terms of biological role, catalyzes the hydrolysis of 6-phosphogluconolactone to 6-phosphogluconate. This Klebsiella pneumoniae subsp. pneumoniae (strain ATCC 700721 / MGH 78578) protein is 6-phosphogluconolactonase.